The sequence spans 146 residues: Anti-sigma F factor (146 aa).

The protein belongs to the anti-sigma-factor family.

It carries out the reaction L-seryl-[protein] + ATP = O-phospho-L-seryl-[protein] + ADP + H(+). It catalyses the reaction L-threonyl-[protein] + ATP = O-phospho-L-threonyl-[protein] + ADP + H(+). Binds to sigma F and blocks its ability to form an RNA polymerase holoenzyme (E-sigma F). Phosphorylates SpoIIAA on a serine residue. This phosphorylation may enable SpoIIAA to act as an anti-anti-sigma factor that counteracts SpoIIAB and thus releases sigma F from inhibition. This is Anti-sigma F factor from Geobacillus thermodenitrificans (strain NG80-2).